Reading from the N-terminus, the 242-residue chain is Segregation and condensation protein A (242 aa).

The protein belongs to the ScpA family. In terms of assembly, component of a cohesin-like complex composed of ScpA, ScpB and the Smc homodimer, in which ScpA and ScpB bind to the head domain of Smc. The presence of the three proteins is required for the association of the complex with DNA.

It localises to the cytoplasm. Functionally, participates in chromosomal partition during cell division. May act via the formation of a condensin-like complex containing Smc and ScpB that pull DNA away from mid-cell into both cell halves. The polypeptide is Segregation and condensation protein A (Lactococcus lactis subsp. lactis (strain IL1403) (Streptococcus lactis)).